The sequence spans 186 residues: Adenine phosphoribosyltransferase (186 aa).

The protein belongs to the purine/pyrimidine phosphoribosyltransferase family. Homodimer.

The protein resides in the cytoplasm. The enzyme catalyses AMP + diphosphate = 5-phospho-alpha-D-ribose 1-diphosphate + adenine. It participates in purine metabolism; AMP biosynthesis via salvage pathway; AMP from adenine: step 1/1. Its function is as follows. Catalyzes a salvage reaction resulting in the formation of AMP, that is energically less costly than de novo synthesis. This chain is Adenine phosphoribosyltransferase, found in Xanthomonas campestris pv. campestris (strain 8004).